A 416-amino-acid polypeptide reads, in one-letter code: MRYSALSILLNGLRGNRNWAPAWRQPDPKPHYDVIIVGGGGHGLATAYYLAKEFGITNVAVLEKNYIGSGNVGRNTTIIRSNYLLPGNNPFYELSMKLWEGLEQDFNFNAMVSQRGVLNLFHSDAQRDAYTRRGNAMRLHGVDAELLYRAAVRKMLPFLDFDNARFPIQGGLLQRRGGTVRHDAVAWGYARGADSRGVDIIQNCEVTGIRRENGRVIGVETSRGFIGCAKLALAAAGNSSQVAEMAGLRLPIESHVLQAFVSEGLKPFIDGVVTFGAGHFYVSQSDKGGLVFGGDIDGYNSYAQRGNLATVEHVAEAGKAMIPALSRVRVLRSWGGIMDMSMDGSPIIDRTPIDNLYLNAGWCYGGFKATPASGFCFAHLLARGAPQKTAAAFRLDRFERGFLIDEKGQGAQPNLH.

Residues glycine 41, histidine 42, glutamate 63, asparagine 71, threonine 76, and isoleucine 78 each contribute to the FAD site. The residue at position 182 (histidine 182) is a Tele-8alpha-FMN histidine. FAD-binding residues include valine 206, glycine 366, and lysine 368.

It belongs to the SoxB family. As to quaternary structure, heterotetramer composed of subunits alpha (SoxA), beta (SoxB), gamma (SoxG) and delta (SoxD). FAD serves as cofactor. Requires FMN as cofactor.

It localises to the cytoplasm. It catalyses the reaction sarcosine + (6S)-5,6,7,8-tetrahydrofolate + O2 = (6R)-5,10-methylene-5,6,7,8-tetrahydrofolate + glycine + H2O2. It carries out the reaction sarcosine + O2 + H2O = formaldehyde + glycine + H2O2. In the presence of tetrahydrofolate, catalyzes the oxidative demethylation of sarcosine to yield glycine, 5,10-methylenetetrahydrofolate and hydrogen peroxide. In the absence of tetrahydrofolate, catalyzes the oxidative demethylation of sarcosine to yield glycine, formaldehyde and hydrogen peroxide. This is Sarcosine oxidase subunit beta (soxB) from Rhizobium meliloti (strain 1021) (Ensifer meliloti).